Here is a 324-residue protein sequence, read N- to C-terminus: Transmembrane protein 171 (324 aa).

4 helical membrane-spanning segments follow: residues 22–42 (IFCFFVFGAVLLCVGVLLSIF), 57–77 (MVLKVAGPACAVVGLGAVILA), 113–133 (LIFGFLFLTSGMLISVLGIWV), and 160–180 (FLSLQIMGPLIVLVGLCFFVV). A compositionally biased stretch (low complexity) spans 229–239 (PESSASAVAES). 2 disordered regions span residues 229 to 248 (PESSASAVAESPGTNSLLPN) and 279 to 304 (YTISGTNSSSEASHTPHLPSELPPRY). A compositionally biased stretch (polar residues) spans 279-291 (YTISGTNSSSEAS).

It is found in the membrane. The chain is Transmembrane protein 171 (TMEM171) from Homo sapiens (Human).